Here is a 183-residue protein sequence, read N- to C-terminus: Protein jagunal homolog 1 (183 aa).

Over 1-39 the chain is Cytoplasmic; that stretch reads MASRAGPRAAGTDGSDFQHRERVAMHYQMSVTLKYEIKK. At Ser3 the chain carries Phosphoserine. A helical membrane pass occupies residues 40 to 60; it reads LIYVHLVIWLLLVAKMSVGHL. The Lumenal portion of the chain corresponds to 61 to 71; sequence RLLSHDQVAMP. Residues 72 to 92 traverse the membrane as a helical segment; that stretch reads YQWEYPYLLSVVPSLLGLLSF. Over 93–96 the chain is Cytoplasmic; it reads PRNN. A helical transmembrane segment spans residues 97 to 117; that stretch reads ISYLVLSMISMGLFSIAPLIY. The Lumenal portion of the chain corresponds to 118–137; sequence GSMEMFPAAQQLYRHGKAYR. A helical transmembrane segment spans residues 138-158; that stretch reads FLFGFSAVSVMYLVLVLAVQV. At 159 to 183 the chain is on the cytoplasmic side; the sequence is HAWQLYYSKKLLDSWFTSTQEKKRK.

It belongs to the jagunal family. As to quaternary structure, interacts with COPA, COPB2 and COPG2.

It localises to the endoplasmic reticulum membrane. Functionally, endoplasmic reticulum transmembrane protein involved in vesicle-mediated transport, which is required for neutrophil function. Required for vesicle-mediated transport; it is however unclear whether it is involved in early secretory pathway or intracellular protein transport. Acts as a regulator of neutrophil function, probably via its role in vesicle-mediated transport: required for defense against fungal pathogens and for granulocyte colony-stimulating factor (GM-CSF) signaling pathway; possibly by regulating glycosylation and/or targeting of proteins contributing to the viability and migration of neutrophils. The chain is Protein jagunal homolog 1 (JAGN1) from Bos taurus (Bovine).